Reading from the N-terminus, the 328-residue chain is UPF0104 membrane protein AF_2231 (328 aa).

The next 6 membrane-spanning stretches (helical) occupy residues 31–51 (NWLL…LWAL), 116–136 (ILDS…TGFS), 139–159 (FGFK…YILY), 221–241 (LVTL…LVAL), 245–265 (AYFL…LVPL), and 277–297 (MAYL…VGLW).

It belongs to the UPF0104 family.

It localises to the cell membrane. This Archaeoglobus fulgidus (strain ATCC 49558 / DSM 4304 / JCM 9628 / NBRC 100126 / VC-16) protein is UPF0104 membrane protein AF_2231.